The sequence spans 348 residues: CCAAT/enhancer-binding protein beta (348 aa).

Residues 1 to 24 (MQRLVVWDPVCLPLPPPPPAFKSM) are required for Lys-174 sumoylation. Arginine 3 carries the post-translational modification Asymmetric dimethylarginine; by CARM1. Residues 24 to 135 (MEVANFYYEA…YGGKNCKKAA (112 aa)) are required for MYC transcriptional repression. The residue at position 43 (lysine 43) is an N6-acetyllysine; alternate. An N6-methylated lysine; alternate modification is found at lysine 43. 2 disordered regions span residues 44–65 (AAPA…ELGS) and 79–112 (LEPL…ASSG). A compositionally biased stretch (pro residues) spans 47–59 (AAPPADRPGPRPP). Residues 116–124 (DFLSDLFSD) carry the 9aaTAD motif. An N6-acetyllysine; by KAT2A and KAT2B mark is found at lysine 129 and lysine 132. Lysine 133 bears the N6-acetyllysine; by KAT2A and KAT2B; alternate mark. Lysine 133 participates in a covalent cross-link: Glycyl lysine isopeptide (Lys-Gly) (interchain with G-Cter in SUMO2); alternate. The tract at residues 158–178 (APLHPPPPPPPPPAELKAEPG) is disordered. Over residues 160 to 171 (LHPPPPPPPPPA) the composition is skewed to pro residues. A Glycyl lysine isopeptide (Lys-Gly) (interchain with G-Cter in SUMO2); alternate cross-link involves residue lysine 174. Lysine 174 participates in a covalent cross-link: Glycyl lysine isopeptide (Lys-Gly) (interchain with G-Cter in SUMO); alternate. Residues lysine 185 and lysine 187 each participate in a glycyl lysine isopeptide (Lys-Gly) (interchain with G-Cter in SUMO2) cross-link. A compositionally biased stretch (low complexity) spans 219–259 (SGSSGSLSTSSSSSPPGTPSPADAKATPAAAACYAGAAPAP). The disordered stretch occupies residues 219 to 277 (SGSSGSLSTSSSSSPPGTPSPADAKATPAAAACYAGAAPAPSQVKSKAKKTVDKHSDEY). Threonine 227 carries the post-translational modification Phosphothreonine; by GSK3-beta. Serine 228 and serine 229 each carry an O-linked (GlcNAc) serine glycan. Serine 232 carries the post-translational modification Phosphoserine; by GSK3-beta. Position 236 is a phosphothreonine; by RPS6KA1, CDK2 and MAPK (threonine 236). Glycyl lysine isopeptide (Lys-Gly) (interchain with G-Cter in SUMO2) cross-links involve residues lysine 263 and lysine 265. Residues 268-277 (KTVDKHSDEY) are compositionally biased toward basic and acidic residues. Phosphothreonine; by RPS6KA1 and PKC/PRKCA is present on threonine 269. The region spanning 274–337 (SDEYKIRRER…STLRNLFKTL (64 aa)) is the bZIP domain. The tract at residues 278 to 298 (KIRRERNNIAVRKSRDKAKMR) is basic motif. At serine 291 the chain carries Phosphoserine; by PKC/PRKCA. The leucine-zipper stretch occupies residues 300 to 307 (LETQHKVL). A Phosphoserine; by CaMK2 modification is found at serine 328. Lysine 335 participates in a covalent cross-link: Glycyl lysine isopeptide (Lys-Gly) (interchain with G-Cter in SUMO2).

The protein belongs to the bZIP family. C/EBP subfamily. In terms of assembly, binds DNA as a homodimer and as a heterodimer. Interacts with ATF4. Binds DNA as a heterodimer with ATF4. Interacts with MYB; within the complex, MYB and CEBPB bind to different promoter regions. Can form stable heterodimers with CEBPA, CEBPD and CEBPG. Interacts with SIX1. Interacts with TRIM28 and PTGES2. Interacts with PRDM16. Interacts with CCDC85B. Forms a complex with THOC5. Interacts with ZNF638; this interaction increases transcriptional activation. Interacts with CIDEA and CIDEC; these interactions increase transcriptional activation of a subset of CEBPB downstream target genes. Interacts with DDIT3/CHOP. Interacts with EP300; recruits EP300 to chromatin. Interacts with RORA; the interaction disrupts interaction with EP300. Interacts (not methylated) with MED23, MED26, SMARCA2, SMARCB1 and SMARCC1. Interacts with KAT2A and KAT2B. Interacts with ATF5; EP300 is required for ATF5 and CEBPB interaction and DNA binding. Interacts with NFE2L1; the heterodimer represses expression of DSPP during odontoblast differentiation. Methylated. Methylation at Arg-3 by CARM1 and at Lys-43 by EHMT2 inhibit transactivation activity. Methylation is probably inhibited by phosphorylation at Thr-236. In terms of processing, sumoylated by polymeric chains of SUMO2 or SUMO3. Sumoylation at Lys-174 is required for inhibition of T-cells proliferation. In adipocytes, sumoylation at Lys-174 by PIAS1 leads to ubiquitination and subsequent proteasomal degradation. Desumoylated by SENP2, which abolishes ubiquitination and stabilizes protein levels. Post-translationally, ubiquitinated, leading to proteasomal degradation. Phosphorylated at Thr-236 by MAPK and CDK2, serves to prime phosphorylation at Thr-227 and Ser-232 by GSK3B and acquire DNA-binding as well as transactivation activities, required to induce adipogenesis. MAPK and CDK2 act sequentially to maintain Thr-236 in the primed phosphorylated state during mitotical cloning expansion and thereby progression of terminal differentiation. Phosphorylation at Thr-269 enhances transactivation activity. Phosphorylation at Ser-328 in response to calcium increases transactivation activity. Phosphorylated at Thr-236 by RPS6KA1. In terms of processing, O-glycosylated, glycosylation at Ser-228 and Ser-229 prevents phosphorylation on Thr-236, Ser-232 and Thr-227 and DNA binding activity which delays the adipocyte differentiation program. Post-translationally, acetylated. Acetylation at Lys-43 is an important and dynamic regulatory event that contributes to its ability to transactivate target genes, including those associated with adipogenesis and adipocyte function. Deacetylation by HDAC1 represses its transactivation activity. Acetylated by KAT2A and KAT2B within a cluster of lysine residues between amino acids 129-133, this acetylation is strongly induced by glucocorticoid treatment and enhances transactivation activity.

It localises to the nucleus. The protein resides in the cytoplasm. In terms of biological role, important transcription factor regulating the expression of genes involved in immune and inflammatory responses. Also plays a significant role in adipogenesis, as well as in the gluconeogenic pathway, liver regeneration, and hematopoiesis. The consensus recognition site is 5'-T[TG]NNGNAA[TG]-3'. Its functional capacity is governed by protein interactions and post-translational protein modifications. During early embryogenesis, plays essential and redundant roles with CEBPA. Has a promitotic effect on many cell types such as hepatocytes and adipocytes but has an antiproliferative effect on T-cells by repressing MYC expression, facilitating differentiation along the T-helper 2 lineage. Binds to regulatory regions of several acute-phase and cytokines genes and plays a role in the regulation of acute-phase reaction and inflammation. Also plays a role in intracellular bacteria killing. During adipogenesis, is rapidly expressed and, after activation by phosphorylation, induces CEBPA and PPARG, which turn on the series of adipocyte genes that give rise to the adipocyte phenotype. The delayed transactivation of the CEBPA and PPARG genes by CEBPB appears necessary to allow mitotic clonal expansion and thereby progression of terminal differentiation. Essential for female reproduction because of a critical role in ovarian follicle development. Restricts osteoclastogenesis: together with NFE2L1; represses expression of DSPP during odontoblast differentiation. The chain is CCAAT/enhancer-binding protein beta (CEBPB) from Bos taurus (Bovine).